Here is an 837-residue protein sequence, read N- to C-terminus: Outer membrane usher protein HifC (837 aa).

The N-terminal stretch at 1–26 (MKTKNFPLNKIAFACTLLLANPVAWA) is a signal peptide. C813 and C833 are oxidised to a cystine.

This sequence belongs to the fimbrial export usher family.

The protein localises to the cell outer membrane. Essential for piliation. In Haemophilus influenzae, this protein is Outer membrane usher protein HifC (hifC).